A 541-amino-acid chain; its full sequence is Membrane protein insertase YidC (541 aa).

The next 5 membrane-spanning stretches (helical) occupy residues 6-26, 349-369, 420-440, 457-477, and 500-520; these read NILL…WQAD, FVGN…GLLF, GGCL…WVLL, LSVQ…MFVM, and VIFT…WLVG.

This sequence belongs to the OXA1/ALB3/YidC family. Type 1 subfamily. As to quaternary structure, interacts with the Sec translocase complex via SecD. Specifically interacts with transmembrane segments of nascent integral membrane proteins during membrane integration.

It localises to the cell inner membrane. Its function is as follows. Required for the insertion and/or proper folding and/or complex formation of integral membrane proteins into the membrane. Involved in integration of membrane proteins that insert both dependently and independently of the Sec translocase complex, as well as at least some lipoproteins. Aids folding of multispanning membrane proteins. This is Membrane protein insertase YidC from Shewanella sp. (strain MR-7).